Reading from the N-terminus, the 679-residue chain is Glutamine-dependent NAD(+) synthetase (679 aa).

The region spanning V12–T276 is the CN hydrolase domain. Residue E52 is the Proton acceptor; for glutaminase activity of the active site. Catalysis depends on K121, which acts as the For glutaminase activity. Y127 contributes to the L-glutamine binding site. The active-site Nucleophile; for glutaminase activity is the C176. 2 residues coordinate L-glutamine: S203 and R209. Positions Q337–G679 are ligase. Residue G366–S373 coordinates ATP. N456 provides a ligand contact to deamido-NAD(+). T480 is an ATP binding site. Deamido-NAD(+)-binding positions include E485, W490–Y493, and K635. Residues L639 to R658 form a disordered region.

It in the C-terminal section; belongs to the NAD synthetase family.

It carries out the reaction deamido-NAD(+) + L-glutamine + ATP + H2O = L-glutamate + AMP + diphosphate + NAD(+) + H(+). Its pathway is cofactor biosynthesis; NAD(+) biosynthesis; NAD(+) from deamido-NAD(+) (L-Gln route): step 1/1. Catalyzes the ATP-dependent amidation of deamido-NAD to form NAD. Uses L-glutamine as a nitrogen source. This Mycobacterium bovis (strain ATCC BAA-935 / AF2122/97) protein is Glutamine-dependent NAD(+) synthetase.